We begin with the raw amino-acid sequence, 438 residues long: MKKLLLAASIICLASAGLAEENPTPVISNSDTEIKLEGFYLFENGYVKQDHLILFDKNVTDNRKKLGFYTEAAFAATIAKTINDVIAGAKIVLQPTTRAKTSTNYNGSHIFIETSYGKVELGSPADASAKLRITGSQVTAGTGGWSRYALLDGQYMRYNGLKSDFDTNASFYLESYSNSFDQINDKAERARRLNFFTPKMKGFQAGVSYTPDTANTGGNRDINNLTLASSGRNGVSVSKTGIKTVKLENNETMTINQNIRDAFSAGLTYEHEISEDADLKLSVTGEYGKPARRLIHAKMDGTTIQVLNTYKLSNLKAYNLGAVFTYGNFSCGASYGNLGKSLTAKEYYKVGRDTYYYNGAVAYGQGPIKTSLEYLKTSRYKNTVDAVSLATEYKIMPGLLPYAEISHFQAKGKPVYYPEAPSKTTRGTVGLIGTKLKF.

The signal sequence occupies residues 1–19 (MKKLLLAASIICLASAGLA).

This is an uncharacterized protein from Rickettsia conorii (strain ATCC VR-613 / Malish 7).